Here is a 513-residue protein sequence, read N- to C-terminus: GMP synthase [glutamine-hydrolyzing] (513 aa).

A Glutamine amidotransferase type-1 domain is found at 3–200 (SVLVLDFGSQ…LITIAGITPD (198 aa)). Cys-80 acts as the Nucleophile in catalysis. Catalysis depends on residues His-174 and Glu-176. The region spanning 201–388 (WSSKSFIEHQ…LGIAEDILMR (188 aa)) is the GMPS ATP-PPase domain. 228-234 (SGGVDST) serves as a coordination point for ATP.

Homodimer.

The catalysed reaction is XMP + L-glutamine + ATP + H2O = GMP + L-glutamate + AMP + diphosphate + 2 H(+). It participates in purine metabolism; GMP biosynthesis; GMP from XMP (L-Gln route): step 1/1. In terms of biological role, catalyzes the synthesis of GMP from XMP. This Pelodictyon phaeoclathratiforme (strain DSM 5477 / BU-1) protein is GMP synthase [glutamine-hydrolyzing].